The primary structure comprises 141 residues: Putative pre-16S rRNA nuclease (141 aa).

The protein belongs to the YqgF nuclease family.

The protein resides in the cytoplasm. Its function is as follows. Could be a nuclease involved in processing of the 5'-end of pre-16S rRNA. The polypeptide is Putative pre-16S rRNA nuclease (Natranaerobius thermophilus (strain ATCC BAA-1301 / DSM 18059 / JW/NM-WN-LF)).